Here is a 151-residue protein sequence, read N- to C-terminus: Ribosome maturation factor RimP (151 aa).

Belongs to the RimP family.

The protein resides in the cytoplasm. In terms of biological role, required for maturation of 30S ribosomal subunits. This Persephonella marina (strain DSM 14350 / EX-H1) protein is Ribosome maturation factor RimP.